The following is a 951-amino-acid chain: Plasma membrane ATPase (951 aa).

A run of 4 helical transmembrane segments spans residues Phe-61–Ile-81, Trp-93–Glu-113, Ile-243–Phe-263, and Leu-277–Met-297. Catalysis depends on Asp-329, which acts as the 4-aspartylphosphate intermediate. Residues Asp-588 and Asp-592 each coordinate Mg(2+). 6 consecutive transmembrane segments (helical) span residues Ile-647–Trp-667, Phe-671–Ser-691, Ile-709–Trp-729, Glu-752–Thr-772, Leu-785–Ala-805, and Gly-814–Leu-834.

The protein belongs to the cation transport ATPase (P-type) (TC 3.A.3) family. Type IIIA subfamily.

Its subcellular location is the cell membrane. The enzyme catalyses ATP + H2O + H(+)(in) = ADP + phosphate + 2 H(+)(out). Functionally, the plasma membrane ATPase of plants and fungi is a hydrogen ion pump. The proton gradient it generates drives the active transport of nutrients by H(+)-symport. The resulting external acidification and/or internal alkinization may mediate growth responses. The sequence is that of Plasma membrane ATPase from Oryza sativa subsp. japonica (Rice).